Here is a 373-residue protein sequence, read N- to C-terminus: ATP phosphoribosyltransferase regulatory subunit (373 aa).

Belongs to the class-II aminoacyl-tRNA synthetase family. HisZ subfamily. Heteromultimer composed of HisG and HisZ subunits.

The protein localises to the cytoplasm. It functions in the pathway amino-acid biosynthesis; L-histidine biosynthesis; L-histidine from 5-phospho-alpha-D-ribose 1-diphosphate: step 1/9. Required for the first step of histidine biosynthesis. May allow the feedback regulation of ATP phosphoribosyltransferase activity by histidine. The protein is ATP phosphoribosyltransferase regulatory subunit of Rhizobium leguminosarum bv. trifolii (strain WSM2304).